Here is a 346-residue protein sequence, read N- to C-terminus: Biotin synthase (346 aa).

A Radical SAM core domain is found at 38–256; it reads RQVQVSTLLS…IAVARIMMPT (219 aa). Cys53, Cys57, and Cys60 together coordinate [4Fe-4S] cluster. The [2Fe-2S] cluster site is built by Cys97, Cys128, Cys188, and Arg260.

This sequence belongs to the radical SAM superfamily. Biotin synthase family. Homodimer. It depends on [4Fe-4S] cluster as a cofactor. Requires [2Fe-2S] cluster as cofactor.

The catalysed reaction is (4R,5S)-dethiobiotin + (sulfur carrier)-SH + 2 reduced [2Fe-2S]-[ferredoxin] + 2 S-adenosyl-L-methionine = (sulfur carrier)-H + biotin + 2 5'-deoxyadenosine + 2 L-methionine + 2 oxidized [2Fe-2S]-[ferredoxin]. Its pathway is cofactor biosynthesis; biotin biosynthesis; biotin from 7,8-diaminononanoate: step 2/2. Catalyzes the conversion of dethiobiotin (DTB) to biotin by the insertion of a sulfur atom into dethiobiotin via a radical-based mechanism. This chain is Biotin synthase, found in Escherichia coli O6:H1 (strain CFT073 / ATCC 700928 / UPEC).